The following is a 340-amino-acid chain: Flavonoid 7-O-methyltransferase 1 (340 aa).

S-adenosyl-L-methionine is bound at residue Asp-207. Residue His-245 is the Proton acceptor of the active site.

The protein belongs to the class I-like SAM-binding methyltransferase superfamily. Cation-independent O-methyltransferase family. In terms of assembly, homodimer. Expressed in leaves.

The enzyme catalyses (2S)-naringenin + S-adenosyl-L-methionine = (2S)-sakuranetin + S-adenosyl-L-homocysteine + H(+). It carries out the reaction scutellarein + S-adenosyl-L-methionine = scutellarein 7-methyl ether + S-adenosyl-L-homocysteine. The catalysed reaction is apigenin + S-adenosyl-L-methionine = genkwanin + S-adenosyl-L-homocysteine + H(+). It catalyses the reaction luteolin + S-adenosyl-L-methionine = luteolin 7-methyl ether + S-adenosyl-L-homocysteine + H(+). The enzyme catalyses chrysoeriol + S-adenosyl-L-methionine = velutin + S-adenosyl-L-homocysteine. It carries out the reaction diosmetin + S-adenosyl-L-methionine = luteolin 4',7-dimethyl ether + S-adenosyl-L-homocysteine. The catalysed reaction is acacetin + S-adenosyl-L-methionine = apigenin 4',7-dimethyl ether + S-adenosyl-L-homocysteine. It catalyses the reaction scutellarein 4'-methyl ether + S-adenosyl-L-methionine = ladanein + S-adenosyl-L-homocysteine. It participates in flavonoid metabolism. Flavonoid 7-O-methyltransferase involved in the biosynthesis of polymethoxylated flavonoids natural products such as nevadensin and salvigenin, aroma compounds which contribute to the flavor of sweet basil, and exhibit pharmacological activities such as anti-allergic, anti-oxidant, antibacterial, anti-proliferative, and anti-inflammatory effects. Catalyzes S-adenosylmethionine-dependent regioselective 7-O-methylation of flavonoids; active on various hydroxylated flavonoid substrates, including apigenin (API) and luteolin (LUT), and, with a lower efficiency, scutellarein (SCU), naringenin (NAR), chrysoeriol (CHRYS), diosmetin (DIOS), acacetin (ACA) and scutellarein-7-methyl ether (SCU7Me). This chain is Flavonoid 7-O-methyltransferase 1, found in Ocimum basilicum (Sweet basil).